The chain runs to 297 residues: MRPALSDYRHLASGKVRELYRIDDEHLLFVATDRISAYDHILSSEIPDKGRILTAMSVFFFDLIDAPNHLAGPPDDPRIPEEVLGRALVVRQLEMLPVECVARGYLTGSGLIDYRKTGTLCGLTLPPGLTEASKFAEPLYTPASKAELGLHDENIDFAATVDLVGEKRAAQLRERTLQIYTQGADHALTKGIIIADTKFEFGVDPSGELVLADEVFTPDSSRYWYADAYREGQVQPSYDKQFVRNWLTGPESGWDRAADQPPPPLPAEIVDATRSRYIEAYERISGLSFAEWIGASA.

It belongs to the SAICAR synthetase family.

The catalysed reaction is 5-amino-1-(5-phospho-D-ribosyl)imidazole-4-carboxylate + L-aspartate + ATP = (2S)-2-[5-amino-1-(5-phospho-beta-D-ribosyl)imidazole-4-carboxamido]succinate + ADP + phosphate + 2 H(+). It functions in the pathway purine metabolism; IMP biosynthesis via de novo pathway; 5-amino-1-(5-phospho-D-ribosyl)imidazole-4-carboxamide from 5-amino-1-(5-phospho-D-ribosyl)imidazole-4-carboxylate: step 1/2. The protein is Phosphoribosylaminoimidazole-succinocarboxamide synthase of Mycobacterium sp. (strain KMS).